We begin with the raw amino-acid sequence, 365 residues long: Heat-inducible transcription repressor HrcA (365 aa).

The protein belongs to the HrcA family.

Negative regulator of class I heat shock genes (grpE-dnaK-dnaJ and groELS operons). Prevents heat-shock induction of these operons. The protein is Heat-inducible transcription repressor HrcA of Trichormus variabilis (strain ATCC 29413 / PCC 7937) (Anabaena variabilis).